Consider the following 147-residue polypeptide: Nucleoside diphosphate kinase (147 aa).

Lysine 9, phenylalanine 57, arginine 85, threonine 91, arginine 102, and asparagine 112 together coordinate ATP. The Pros-phosphohistidine intermediate role is filled by histidine 115.

The protein belongs to the NDK family. In terms of assembly, homotetramer. Requires Mg(2+) as cofactor.

The protein resides in the cytoplasm. It catalyses the reaction a 2'-deoxyribonucleoside 5'-diphosphate + ATP = a 2'-deoxyribonucleoside 5'-triphosphate + ADP. It carries out the reaction a ribonucleoside 5'-diphosphate + ATP = a ribonucleoside 5'-triphosphate + ADP. In terms of biological role, major role in the synthesis of nucleoside triphosphates other than ATP. The ATP gamma phosphate is transferred to the NDP beta phosphate via a ping-pong mechanism, using a phosphorylated active-site intermediate. The polypeptide is Nucleoside diphosphate kinase (Listeria innocua serovar 6a (strain ATCC BAA-680 / CLIP 11262)).